The following is a 100-amino-acid chain: DNA base-flipping protein (100 aa).

It belongs to the MGMT family. ATL subfamily.

Functionally, involved in DNA damage recognition. Binds DNA containing O(6)-methylguanine. Binds to the damaged base and flips the base out of the DNA duplex into an extrahelical conformation, which allows processing by repair proteins. This is DNA base-flipping protein from Vibrio parahaemolyticus serotype O3:K6 (strain AQ3810).